The sequence spans 205 residues: Mitochondrial ATP-independent inner membrane protease subunit 2 (205 aa).

Active-site residues include E59 and R104.

Belongs to the peptidase S26 family. IMP1 subfamily. In terms of assembly, heterodimer of 2 subunits, IMP1A/B and IMP12.

Its subcellular location is the mitochondrion inner membrane. In terms of biological role, catalyzes the removal of transit peptides required for the targeting of proteins from the mitochondrial matrix, across the inner membrane, into the inter-membrane space. The sequence is that of Mitochondrial ATP-independent inner membrane protease subunit 2 from Arabidopsis thaliana (Mouse-ear cress).